Here is a 163-residue protein sequence, read N- to C-terminus: MMLELNGLHAGLRFSSAHIVFGHPTCGVIHGHSYYVDVKLYGERAGDFKFVCDFKIIKKIVKEICDELDHKLILPKNHEHVYYELRDKTLYFKYENKEYSIPVEDVILLPIPSTTAEDLAIYFANEIADRLKNLGFSNINWIEVSINEGIGQGACYRKYLEVK.

His18 serves as a coordination point for Zn(2+). Cys26 serves as the catalytic Proton acceptor. Zn(2+)-binding residues include His30 and His32. Residues His70 and Glu148 each act as charge relay system in the active site.

The protein belongs to the PTPS family. QueD subfamily. It depends on Zn(2+) as a cofactor.

It carries out the reaction 7,8-dihydroneopterin 3'-triphosphate + H2O = 6-carboxy-5,6,7,8-tetrahydropterin + triphosphate + acetaldehyde + 2 H(+). It functions in the pathway purine metabolism; 7-cyano-7-deazaguanine biosynthesis. Its function is as follows. Catalyzes the conversion of 7,8-dihydroneopterin triphosphate (H2NTP) to 6-carboxy-5,6,7,8-tetrahydropterin (CPH4) and acetaldehyde. The polypeptide is Putative 6-carboxy-5,6,7,8-tetrahydropterin synthase (queD) (Methanocaldococcus jannaschii (strain ATCC 43067 / DSM 2661 / JAL-1 / JCM 10045 / NBRC 100440) (Methanococcus jannaschii)).